We begin with the raw amino-acid sequence, 256 residues long: Gamma carbonic anhydrase-like 2, mitochondrial (256 aa).

A mitochondrion-targeting transit peptide spans 1–33 (MATSLARISKRSITSAVSSNLIRRYFAAEAVAV). Substrate-binding positions include 103–105 (RGD) and 118–119 (QE). His-124 is a Zn(2+) binding site. The substrate site is built by Arg-152, Gln-164, and Tyr-231.

This sequence belongs to the gamma-class carbonic anhydrase family. In terms of assembly, component of the mitochondrial oxidoreductase respiratory chain complex I; element of the extra matrix-exposed domain, which is attached to the membrane arm of this complex. Interacts with GAMMACA2.

It is found in the mitochondrion membrane. Its function is as follows. Involved in complex I assembly in mitochondria and respiration. The sequence is that of Gamma carbonic anhydrase-like 2, mitochondrial (GAMMACAL2) from Arabidopsis thaliana (Mouse-ear cress).